Reading from the N-terminus, the 1014-residue chain is Klotho (1014 aa).

An N-terminal signal peptide occupies residues 1-34 (MLARAPPRRPPRLVLLRLLLLHLLLLALRARCLS). Topologically, residues 35-982 (AEPGQGAQTW…TECGFFQTRK (948 aa)) are extracellular. Glycosyl hydrolase-1 regions lie at residues 59–508 (LHDT…DNGF) and 517–955 (LEGT…SNGF). Residues N161, N285, N346, N609, N614, and N696 are each glycosylated (N-linked (GlcNAc...) asparagine). Residues 983–1003 (SLLVFISFLVFTFIISLALIF) form a helical membrane-spanning segment. At 1004–1014 (HYSKKGQRSYK) the chain is on the cytoplasmic side.

It belongs to the glycosyl hydrolase 1 family. Klotho subfamily. Homodimer. Interacts with FGF23 and FGFR1. In terms of processing, N-glycosylated. As to expression, membrane-bound protein is present in distal renal tubules, inner ear, ependymal cells of brain choroid plexus, elongating spermatids and mature oocytes (at protein level). Soluble peptide is present in serum (100 pM) and cerebrospinal fluid. Expressed strongly in kidney, moderately in brain choroid plexus, and at low levels in pituitary, placenta, skeletal muscle, urinary bladder, aorta, pancreas, testis, ovary, colon, thyroid gland and adipocytes.

It is found in the cell membrane. It localises to the apical cell membrane. Its subcellular location is the secreted. The catalysed reaction is a beta-D-glucuronoside + H2O = D-glucuronate + an alcohol. Inhibited by D-saccharic acid 1,4-lactone and taurocholic acid. In terms of biological role, may have weak glycosidase activity towards glucuronylated steroids. However, it lacks essential active site Glu residues at positions 241 and 874, suggesting it may be inactive as a glycosidase in vivo. May be involved in the regulation of calcium and phosphorus homeostasis by inhibiting the synthesis of active vitamin D. Essential factor for the specific interaction between FGF23 and FGFR1. Its function is as follows. The Klotho peptide generated by cleavage of the membrane-bound isoform may be an anti-aging circulating hormone which would extend life span by inhibiting insulin/IGF1 signaling. This is Klotho (Kl) from Mus musculus (Mouse).